Here is a 224-residue protein sequence, read N- to C-terminus: Probable C-&gt;U-editing enzyme APOBEC-2 (224 aa).

The disordered stretch occupies residues M1–E25. E60 and H98 together coordinate Zn(2+). Residues G64–L169 enclose the CMP/dCMP-type deaminase domain. The active-site Proton donor is E100. C128 and C131 together coordinate Zn(2+).

The protein belongs to the cytidine and deoxycytidylate deaminase family. In terms of assembly, homotetramer. Requires Zn(2+) as cofactor.

The catalysed reaction is cytidine(6666) in apoB mRNA + H2O + H(+) = uridine(6666) in apoB mRNA + NH4(+). Its function is as follows. Probable C to U editing enzyme whose physiological substrate is not yet known. Does not display detectable apoB mRNA editing. Has a low intrinsic cytidine deaminase activity. May play a role in the epigenetic regulation of gene expression through the process of active DNA demethylation. The chain is Probable C-&gt;U-editing enzyme APOBEC-2 (APOBEC2) from Bos taurus (Bovine).